The following is a 379-amino-acid chain: Botryococcene C-methyltransferase (379 aa).

A helical membrane pass occupies residues 17-37; sequence LLTWKGAAGLAAAVALGYIII.

It belongs to the class I-like SAM-binding methyltransferase superfamily. Erg6/SMT family.

Its subcellular location is the microsome membrane. The enzyme catalyses C30 botryococcene + 2 S-adenosyl-L-methionine = 3,20-dimethyl-1,2,21,22-tetradehydro-2,3,20,21-tetrahydrobotryococcene + 2 S-adenosyl-L-homocysteine + 2 H(+). Converts botryococcene to mono- and dimethyl derivatives, but not to tri- and tetramethylated products. Unable to methylate cycloartenol, zymosterol or lanosterol, but can also use squalene as substrate. Methylates both C-3 and C22 positions, but only C-3 position in monomethylated squalenes. In contrast, monomethylated botryococcene occured mainly at the C-20 position yielding showacene, but also at the C-3 position yielding isoshowacene. In Botryococcus braunii (Green alga), this protein is Botryococcene C-methyltransferase (TMT-3).